A 345-amino-acid chain; its full sequence is Ribosomal RNA small subunit methyltransferase H (345 aa).

Residues 47-49 (GGY), Asp65, Phe92, Asp113, and Gln120 contribute to the S-adenosyl-L-methionine site. The disordered stretch occupies residues 296–345 (EPGPDEVAGNPRARSAKLRAAERTNAPAHPGGDLMGLLPAPPPQRHGRRR).

It belongs to the methyltransferase superfamily. RsmH family.

Its subcellular location is the cytoplasm. It carries out the reaction cytidine(1402) in 16S rRNA + S-adenosyl-L-methionine = N(4)-methylcytidine(1402) in 16S rRNA + S-adenosyl-L-homocysteine + H(+). Specifically methylates the N4 position of cytidine in position 1402 (C1402) of 16S rRNA. This is Ribosomal RNA small subunit methyltransferase H from Xanthobacter autotrophicus (strain ATCC BAA-1158 / Py2).